The sequence spans 369 residues: Leucine-specific-binding protein (369 aa).

Positions 1 to 23 are cleaved as a signal peptide; it reads MKRKAKTIIAGIVALAVSQGAMA. Cys-76 and Cys-101 form a disulfide bridge.

It belongs to the leucine-binding protein family.

It localises to the periplasm. This protein is a component of the leucine-specific transport system, which is one of the two periplasmic binding protein-dependent transport systems of the high-affinity transport of the branched-chain amino acids. In Salmonella typhi, this protein is Leucine-specific-binding protein (livK).